Here is a 261-residue protein sequence, read N- to C-terminus: MRLPEQPGEGKPENEKKGDGGALGGGEEPPRSQAPDFPTWEKMPFHHVTAGLLYKGNYLNRSLSAGSDSEQLANISVEELDEIREAFRVLDRDGNGFISKQELGMAMRSLGYMPSEVELAIIMQRLDMDGDGQVDFDEFMTILGPKLVSSEGRDGFLGNTIDSIFWQFDMQRITLEELKHILYHAFRDHLTMKDIENIIINEEESLNETSGNCQTEFEGVHSQKQNRQTCVRKSLICAFAMAFIISVMLIAANQILRSGME.

The disordered stretch occupies residues 1–39 (MRLPEQPGEGKPENEKKGDGGALGGGEEPPRSQAPDFPT). Residues 1 to 234 (MRLPEQPGEG…QNRQTCVRKS (234 aa)) are Cytoplasmic-facing. Over residues 8–19 (GEGKPENEKKGD) the composition is skewed to basic and acidic residues. 2 consecutive EF-hand domains span residues 78-113 (EELDEIREAFRVLDRDGNGFISKQELGMAMRSLGYM) and 114-149 (PSEVELAIIMQRLDMDGDGQVDFDEFMTILGPKLVS). D91, D93, N95, E102, D127, D129, D131, Q133, and E138 together coordinate Ca(2+). The helical; Anchor for type IV membrane protein transmembrane segment at 235–255 (LICAFAMAFIISVMLIAANQI) threads the bilayer. The Extracellular segment spans residues 256–261 (LRSGME).

In terms of assembly, interacts with PI4KB. This binding competes with FREQ/NCS1 binding in a calcium-dependent manner. Brain specific.

Its subcellular location is the golgi apparatus. The protein resides in the trans-Golgi network membrane. It localises to the cytoplasm. The protein localises to the perinuclear region. It is found in the cell membrane. In terms of biological role, negatively regulates Golgi-to-plasma membrane trafficking by interacting with PI4KB and inhibiting its activity. May play a role in the physiology of neurons and is potentially important in memory and learning. This chain is Calcium-binding protein 8 (CALN1), found in Homo sapiens (Human).